Reading from the N-terminus, the 408-residue chain is CinA-like protein (408 aa).

The protein belongs to the CinA family.

This is CinA-like protein from Anaeromyxobacter dehalogenans (strain 2CP-C).